Here is a 20-residue protein sequence, read N- to C-terminus: Brevinin-1LT (20 aa).

A disulfide bridge links Cys14 with Cys20.

As to expression, expressed by the skin glands.

The protein resides in the secreted. In terms of biological role, antimicrobial peptide. The sequence is that of Brevinin-1LT from Rana latastei (Italian agile frog).